The chain runs to 306 residues: Recombination-associated protein RdgC (306 aa).

This sequence belongs to the RdgC family.

It localises to the cytoplasm. The protein localises to the nucleoid. In terms of biological role, may be involved in recombination. In Pseudomonas paraeruginosa (strain DSM 24068 / PA7) (Pseudomonas aeruginosa (strain PA7)), this protein is Recombination-associated protein RdgC.